The following is a 221-amino-acid chain: Tetraspanin-2 (221 aa).

At Met1–Tyr13 the chain is on the cytoplasmic side. Residues Leu14 to Leu34 traverse the membrane as a helical segment. The Extracellular portion of the chain corresponds to Trp35–Tyr54. A helical membrane pass occupies residues Phe55 to Phe75. Over Gly76 to Ser90 the chain is Cytoplasmic. A helical membrane pass occupies residues Phe91–Ile111. Over Gly112–Leu188 the chain is Extracellular. Residue Asn139 is glycosylated (N-linked (GlcNAc...) asparagine). Residues Ile189–Val209 form a helical membrane-spanning segment. At Leu210–Ile221 the chain is on the cytoplasmic side.

The protein belongs to the tetraspanin (TM4SF) family.

It is found in the membrane. Functionally, may play a role in signalling in oligodendrocytes in the early stages of their terminal differentiation into myelin-forming glia and may also function in stabilizing the mature sheath. This chain is Tetraspanin-2 (Tspan2), found in Mus musculus (Mouse).